The following is a 98-amino-acid chain: U11-barytoxin-Tl1b (98 aa).

An N-terminal signal peptide occupies residues 1–21 (MKTLVLVAVLGLASLYLLSYA). The propeptide occupies 22–50 (SEVQQLSRDEEEFRALVASFGGLFDTEER). 3 disulfide bridges follow: cysteine 57-cysteine 71, cysteine 64-cysteine 76, and cysteine 70-cysteine 89.

This sequence belongs to the neurotoxin 10 (Hwtx-1) family. 25 (ICK4) subfamily. In terms of tissue distribution, expressed by the venom gland.

It is found in the secreted. Ion channel inhibitor. In Trittame loki (Brush-footed trapdoor spider), this protein is U11-barytoxin-Tl1b.